Here is a 97-residue protein sequence, read N- to C-terminus: RNA-binding protein YhbY (97 aa).

In terms of domain architecture, CRM spans 1-97; sequence MNLSTKQKQH…TKERKISLPR (97 aa).

The polypeptide is RNA-binding protein YhbY (yhbY) (Escherichia coli O157:H7).